The following is a 589-amino-acid chain: MSELPPGFAVSPRNQQTFKSHYITNDSSPTCLGLQVDSIASLPYRDPARQEKRLPIRILKMLTAHTSHILHPEYLQPLSSAPVSIELDAKKSPLALLAQTCSQIGKPDPPPSSKLGSLSSSSHGDKDSRSSSSSLKSGEHQNLDDKSSFKPYSKTGSECRKEGAGINSSADKAGFRVPNGSSSSVTCTSLPPHAPSPRASSPQQTSGQSHTHRQSQSPLSQKTAHLQTTHMDSKAAGSDPGNDSSSSGSDRNGKKDSDHNKSSLDVVQIANSSHARASVNSSSASSSSSPQPDSKTDSQPPQPSLGTGHIAPVSPFKPGHSVFPLPSSTMGYHGSIVGAYTGYPSQFVPGLDPAKSSLGMGVPGKHPSSSPLTGASPPSFMQGLCRDPYCLTYPNAPHLGGSNCSSCVHDPSSALKSGFPLMYPTHHLHSLHPSSLSSSATSSLSHPLYTYGFMLPNETLPHACNWVSVGGPCDKRFATSEELLAHLRTHTALPGVDGKLLSGYPSSVSSAASCHLHLPPPSSPGALPSSLSLRGSPGLGLARYHPYGKAHLPGAPSLPMHSLPATAPYYSPYALYSQRLGSASALGYQ.

The segment at 102–315 (SQIGKPDPPP…GTGHIAPVSP (214 aa)) is disordered. Residues 113–122 (SKLGSLSSSS) are compositionally biased toward low complexity. The segment covering 137 to 148 (SGEHQNLDDKSS) has biased composition (basic and acidic residues). The segment covering 179-188 (NGSSSSVTCT) has biased composition (polar residues). The span at 196–206 (SPRASSPQQTS) shows a compositional bias: low complexity. A compositionally biased stretch (polar residues) spans 214–230 (QSQSPLSQKTAHLQTTH). Over residues 237–250 (GSDPGNDSSSSGSD) the composition is skewed to low complexity. Residues 251 to 262 (RNGKKDSDHNKS) show a composition bias toward basic and acidic residues. Residues 272-299 (SSHARASVNSSSASSSSSPQPDSKTDSQ) are compositionally biased toward low complexity. Residues 408 to 460 (VHDPSSALKSGFPLMYPTHHLHSLHPSSLSSSATSSLSHPLYTYGFMLPNETL) are required for interaction with Groucho and hdac2 plays an important role in repression of transcription. A C2H2-type zinc finger spans residues 462 to 490 (HACNWVSVGGPCDKRFATSEELLAHLRTH). The required for self-association and nuclear localization stretch occupies residues 498–589 (GKLLSGYPSS…LGSASALGYQ (92 aa)).

This sequence belongs to the Elbow/Noc family. Self-associates. Interacts with nlz2. May interact with Groucho corepressor proteins.

The protein localises to the nucleus. The protein resides in the cytoplasm. Its function is as follows. Transcriptional corepressor which does not bind directly to DNA and may regulate transcription through recruitment of histone deacetylases to gene promoters. Required for segmental gene expression during hindbrain development. May regulate cell adhesion, migration and proliferation. This chain is Zinc finger protein 703 (znf703), found in Danio rerio (Zebrafish).